A 415-amino-acid chain; its full sequence is Squalene synthase 3 (415 aa).

The next 2 membrane-spanning stretches (helical) occupy residues 281 to 301 and 392 to 412; these read AIFR…ALCY and LIII…SNLP.

Belongs to the phytoene/squalene synthase family. Mg(2+) serves as cofactor. It depends on Mn(2+) as a cofactor.

The protein localises to the endoplasmic reticulum membrane. The catalysed reaction is 2 (2E,6E)-farnesyl diphosphate + NADH + H(+) = squalene + 2 diphosphate + NAD(+). The enzyme catalyses 2 (2E,6E)-farnesyl diphosphate + NADPH + H(+) = squalene + 2 diphosphate + NADP(+). It functions in the pathway terpene metabolism; lanosterol biosynthesis; lanosterol from farnesyl diphosphate: step 1/3. Its function is as follows. Component of the triterpene saponins (e.g. ginsenosides or panaxosides) and phytosterols biosynthetic pathways. Catalyzes the biosynthesis of squalene. The protein is Squalene synthase 3 of Panax ginseng (Korean ginseng).